The following is a 340-amino-acid chain: Annexin A2-A (340 aa).

The interval 2-25 (ALIHEILGKLSLEGNQSCARQSAL) is P10 binding site. Annexin repeat units follow at residues 34–105 (FDAE…GLIK), 106–177 (TRPQ…ALAK), 190–262 (EKID…NLVQ), and 266–337 (NKPL…NLCG).

This sequence belongs to the annexin family. Tetramer of 2 light chains (p10 proteins) and 2 heavy chains (p36 proteins).

The protein localises to the secreted. It localises to the extracellular space. The protein resides in the extracellular matrix. It is found in the basement membrane. In terms of biological role, calcium-regulated membrane-binding protein whose affinity for calcium is greatly enhanced by anionic phospholipids. It binds two calcium ions with high affinity. This chain is Annexin A2-A (anxa2-a), found in Xenopus laevis (African clawed frog).